Here is a 175-residue protein sequence, read N- to C-terminus: Pathogenesis-related protein 1A1 (175 aa).

The N-terminal stretch at 1–21 is a signal peptide; sequence MKSSIFVACFITFIIFHSSQA. The SCP domain occupies 29–146; that stretch reads LNAHNAARRR…SGWVFITCNY (118 aa). Disulfide bonds link cysteine 65-cysteine 135, cysteine 108-cysteine 114, and cysteine 130-cysteine 144.

It belongs to the CRISP family.

Functionally, probably involved in the defense reaction of plants against pathogens. The protein is Pathogenesis-related protein 1A1 of Solanum lycopersicum (Tomato).